The following is a 428-amino-acid chain: GTPase Obg (428 aa).

The 158-residue stretch at 1 to 158 folds into the Obg domain; sequence MFVDKVKVYA…RNLLLELKVL (158 aa). The OBG-type G domain occupies 159 to 329; sequence ADVGLVGFPS…LMLAIADELE (171 aa). GTP-binding positions include 165 to 172, 190 to 194, 212 to 215, 282 to 285, and 310 to 312; these read GFPSVGKS, FTTIT, DLPG, NKMD, and SAI. S172 and T192 together coordinate Mg(2+). The OCT domain maps to 350–428; it reads KHELPIEPFT…IMKFEFEFVE (79 aa).

Belongs to the TRAFAC class OBG-HflX-like GTPase superfamily. OBG GTPase family. As to quaternary structure, monomer. Requires Mg(2+) as cofactor.

The protein localises to the cytoplasm. In terms of biological role, an essential GTPase which binds GTP, GDP and possibly (p)ppGpp with moderate affinity, with high nucleotide exchange rates and a fairly low GTP hydrolysis rate. Plays a role in control of the cell cycle, stress response, ribosome biogenesis and in those bacteria that undergo differentiation, in morphogenesis control. In Shouchella clausii (strain KSM-K16) (Alkalihalobacillus clausii), this protein is GTPase Obg.